The sequence spans 375 residues: 23S rRNA (uracil(747)-C(5))-methyltransferase RlmC (375 aa).

Positions 3, 11, 14, and 87 each coordinate [4Fe-4S] cluster. 4 residues coordinate S-adenosyl-L-methionine: glutamine 212, phenylalanine 241, glutamate 262, and asparagine 307. The active-site Nucleophile is the cysteine 334.

This sequence belongs to the class I-like SAM-binding methyltransferase superfamily. RNA M5U methyltransferase family. RlmC subfamily.

The catalysed reaction is uridine(747) in 23S rRNA + S-adenosyl-L-methionine = 5-methyluridine(747) in 23S rRNA + S-adenosyl-L-homocysteine + H(+). In terms of biological role, catalyzes the formation of 5-methyl-uridine at position 747 (m5U747) in 23S rRNA. In Cronobacter sakazakii (strain ATCC BAA-894) (Enterobacter sakazakii), this protein is 23S rRNA (uracil(747)-C(5))-methyltransferase RlmC.